The primary structure comprises 858 residues: DNA mismatch repair protein MutS (858 aa).

An ATP-binding site is contributed by 611-618; that stretch reads GPNMGGKS.

The protein belongs to the DNA mismatch repair MutS family.

This protein is involved in the repair of mismatches in DNA. It is possible that it carries out the mismatch recognition step. This protein has a weak ATPase activity. This is DNA mismatch repair protein MutS from Actinobacillus succinogenes (strain ATCC 55618 / DSM 22257 / CCUG 43843 / 130Z).